A 433-amino-acid polypeptide reads, in one-letter code: Beta-agarase AgaA (433 aa).

The signal sequence occupies residues 1–20; that stretch reads MRKITSILLTCVMGCTATYA. In terms of domain architecture, GH16 spans 21 to 295; the sequence is ADWDGVPVPA…WVRFYKPVPI (275 aa). Residue Glu147 is the Nucleophile of the active site. Glu152 serves as the catalytic Proton donor. The CBM6 domain maps to 300–431; it reads TTVELGNFHN…QWNGDEIRFV (132 aa).

It belongs to the glycosyl hydrolase 16 family. As to quaternary structure, monomer.

The protein resides in the periplasm. The catalysed reaction is Hydrolysis of (1-&gt;4)-beta-D-galactosidic linkages in agarose, giving the tetramer as the predominant product.. Activity is abolished by Hg(2+), Cu(2+), Pb(2+) and Zn(2+) ions, but is not affected by NaCl up to at least 1.0 M, Mg(2+), K(+) and Ca(2+). Not affected by iodoacetamide, p-chloromercuribenzoate, dithiothreitol, 2-mercaptoethanol, EDTA and sodium dodecyl sulfate. Inhibited by N-bromosuccinimide. Functionally, endo-type beta-agarase, which produces neoagarotetraose (NA4) as the main final product, with a small amount of neoagarohexaose (NA6) and neoagarobiose (NA2). The sequence is that of Beta-agarase AgaA from Microbulbifer thermotolerans.